Here is a 202-residue protein sequence, read N- to C-terminus: FMN-dependent NADH:quinone oxidoreductase (202 aa).

FMN is bound by residues S9, 15-17 (SAS), 95-98 (MYNF), and 139-142 (TSGG).

This sequence belongs to the azoreductase type 1 family. Homodimer. FMN serves as cofactor.

The enzyme catalyses 2 a quinone + NADH + H(+) = 2 a 1,4-benzosemiquinone + NAD(+). It carries out the reaction N,N-dimethyl-1,4-phenylenediamine + anthranilate + 2 NAD(+) = 2-(4-dimethylaminophenyl)diazenylbenzoate + 2 NADH + 2 H(+). Functionally, quinone reductase that provides resistance to thiol-specific stress caused by electrophilic quinones. Its function is as follows. Also exhibits azoreductase activity. Catalyzes the reductive cleavage of the azo bond in aromatic azo compounds to the corresponding amines. In Pseudomonas savastanoi pv. phaseolicola (strain 1448A / Race 6) (Pseudomonas syringae pv. phaseolicola (strain 1448A / Race 6)), this protein is FMN-dependent NADH:quinone oxidoreductase.